A 97-amino-acid chain; its full sequence is Spermatogenesis-associated protein 45 (97 aa).

The protein belongs to the SPATA45 family.

In Mus musculus (Mouse), this protein is Spermatogenesis-associated protein 45 (Spata45).